Consider the following 551-residue polypeptide: HTH-type transcriptional regulator SgrR (551 aa).

In terms of domain architecture, HTH marR-type spans 1–116; that stretch reads MPSARLQQQF…LVSHLGRSFR (116 aa). The segment at residues 26-49 is a DNA-binding region (H-T-H motif); that stretch reads LNELAALLSCSRRHMRTLLNTMQD. Residues 163-492 are solute-binding; sequence ELEADIAHHW…IDWQADAARW (330 aa).

Functionally, activates the small RNA gene sgrS under glucose-phosphate stress conditions as well as yfdZ. Represses its own transcription under both stress and non-stress conditions. Might act as a sensor of the intracellular accumulation of phosphoglucose by binding these molecules in its C-terminal solute-binding domain. In Shigella sonnei (strain Ss046), this protein is HTH-type transcriptional regulator SgrR.